Consider the following 229-residue polypeptide: Potassium/proton antiporter CemA (229 aa).

Helical transmembrane passes span 7-27 (FTPL…SLSF), 114-134 (ITCF…LVIL), 154-174 (ILLL…ELMI), and 189-209 (IISG…KYWI).

The protein belongs to the CemA family.

It is found in the plastid. The protein localises to the chloroplast inner membrane. It catalyses the reaction K(+)(in) + H(+)(out) = K(+)(out) + H(+)(in). In terms of biological role, contributes to K(+)/H(+) antiport activity by supporting proton efflux to control proton extrusion and homeostasis in chloroplasts in a light-dependent manner to modulate photosynthesis. Prevents excessive induction of non-photochemical quenching (NPQ) under continuous-light conditions. Indirectly promotes efficient inorganic carbon uptake into chloroplasts. This is Potassium/proton antiporter CemA from Platanus occidentalis (Sycamore).